We begin with the raw amino-acid sequence, 484 residues long: Glycogen synthase (484 aa).

Lys-15 lines the ADP-alpha-D-glucose pocket.

Belongs to the glycosyltransferase 1 family. Bacterial/plant glycogen synthase subfamily.

It carries out the reaction [(1-&gt;4)-alpha-D-glucosyl](n) + ADP-alpha-D-glucose = [(1-&gt;4)-alpha-D-glucosyl](n+1) + ADP + H(+). The protein operates within glycan biosynthesis; glycogen biosynthesis. Its function is as follows. Synthesizes alpha-1,4-glucan chains using ADP-glucose. The sequence is that of Glycogen synthase from Bacillus licheniformis (strain ATCC 14580 / DSM 13 / JCM 2505 / CCUG 7422 / NBRC 12200 / NCIMB 9375 / NCTC 10341 / NRRL NRS-1264 / Gibson 46).